The following is a 503-amino-acid chain: Probable cytochrome P450 303a1 (503 aa).

Position 448 (cysteine 448) interacts with heme.

This sequence belongs to the cytochrome P450 family. Requires heme as cofactor.

The protein localises to the endoplasmic reticulum membrane. It localises to the microsome membrane. Its function is as follows. May be involved in the metabolism of insect hormones and in the breakdown of synthetic insecticides. This Drosophila melanogaster (Fruit fly) protein is Probable cytochrome P450 303a1 (Cyp303a1).